A 242-amino-acid chain; its full sequence is Phosphoribosylaminoimidazole-succinocarboxamide synthase (242 aa).

The protein belongs to the SAICAR synthetase family.

The enzyme catalyses 5-amino-1-(5-phospho-D-ribosyl)imidazole-4-carboxylate + L-aspartate + ATP = (2S)-2-[5-amino-1-(5-phospho-beta-D-ribosyl)imidazole-4-carboxamido]succinate + ADP + phosphate + 2 H(+). The protein operates within purine metabolism; IMP biosynthesis via de novo pathway; 5-amino-1-(5-phospho-D-ribosyl)imidazole-4-carboxamide from 5-amino-1-(5-phospho-D-ribosyl)imidazole-4-carboxylate: step 1/2. This Pediococcus pentosaceus (strain ATCC 25745 / CCUG 21536 / LMG 10740 / 183-1w) protein is Phosphoribosylaminoimidazole-succinocarboxamide synthase.